The chain runs to 886 residues: Envelope glycoprotein GP350 (886 aa).

The Virion surface portion of the chain corresponds to 1–839; that stretch reads MEAALLVCQY…TSQPRFSNLS (839 aa). N-linked (GlcNAc...) asparagine; by host glycans are attached at residues Asn47, Asn87, Asn114, Asn166, Asn169, Asn195, Asn229, Asn277, Asn318, Asn328, Asn345, Asn356, Asn378, Asn386, Asn411, Asn435, Asn443, Asn457, Asn497, Asn519, Asn533, Asn554, Asn568, Asn589, Asn603, Asn606, Asn624, and Asn635. A disordered region spans residues 423 to 810; it reads KAPESTTTSP…PSTSSKLRPR (388 aa). Low complexity predominate over residues 428–437; the sequence is TTTSPTLNTT. The segment covering 442 to 488 has biased composition (polar residues); the sequence is PNTTTGLPSSTHVPTNLTAPASTGPTVSTADVTSPTPAGTTSGASPV. Residues 507 to 595 are compositionally biased toward low complexity; the sequence is TSPTSAVTTP…PTPNATSPTV (89 aa). Over residues 596 to 637 the composition is skewed to polar residues; it reads GETSPQANTTNHTLGGTSSTPVVTSPPKNATSAVTTGQHNIT. Residues 638-660 are compositionally biased toward low complexity; it reads SSSTSSMSLRPSSISETLSPSTS. 2 N-linked (GlcNAc...) asparagine; by host glycosylation sites follow: Asn662 and Asn680. The span at 684–699 shows a compositional bias: low complexity; it reads VTPASTSTHHVSTSSP. A compositionally biased stretch (polar residues) spans 704 to 720; it reads GTTSQASGPGNSSTSTK. N-linked (GlcNAc...) asparagine; by host glycosylation is found at Asn714, Asn725, Asn734, and Asn759. Polar residues predominate over residues 733-760; the sequence is KNATSPQAPSGQKTAVPTVTSTGGKANS. The segment covering 761-771 has biased composition (low complexity); the sequence is TTGGKHTTGHG. The segment covering 773–806 has biased composition (polar residues); the sequence is RTSTEPTTDYGGDSTTPRTRYNATTYLPPSTSSK. 2 N-linked (GlcNAc...) asparagine; by host glycosylation sites follow: Asn794 and Asn837. Residues 840-860 traverse the membrane as a helical segment; that stretch reads MLVLQWASLAVLTLLLLLVMA. Over 861–886 the chain is Intravirion; the sequence is DCAFRRNLSTSHTYTTPPYDDAETYV.

Belongs to the Epstein-Barr GP350 family. Interacts with host CR2. In terms of processing, extensively glycosylated.

It localises to the virion membrane. The protein localises to the host membrane. Initiates virion attachment to host B-lymphocyte cell, leading to virus entry. Acts by binding to host CR2 at the surface of B-lymphocytes, facilitating the binding of viral glycoprotein gp42 to HLA class II molecules. Attachment triggers virion-host membrane fusion and invasion of the host cell. In Homo sapiens (Human), this protein is Envelope glycoprotein GP350.